We begin with the raw amino-acid sequence, 854 residues long: Golgin subfamily A member 6-like protein 22 (854 aa).

6 disordered regions span residues 1–114 (MLMW…HQEA), 320–348 (QEEK…MRRQ), 366–447 (MHEQ…MWRQ), 481–568 (QEEK…MWRQ), 581–681 (RQEE…EQEE), and 714–854 (QEEK…MQEH). The segment covering 15–35 (LPTHPHLPTHPHLPTHPHLPT) has biased composition (basic residues). Positions 45 to 66 (MSKETRQSKLAEAKEQLTDHHP) are enriched in basic and acidic residues. 2 stretches are compositionally biased toward polar residues: residues 67–77 (QTNPSVGTAAS) and 85–97 (NNGT…TSGG). Positions 100 to 114 (SPEDEQKASHQHQEA) are enriched in basic and acidic residues. Residues 103–854 (DEQKASHQHQ…RQQEEKMQEH (752 aa)) adopt a coiled-coil conformation.

Belongs to the GOLGA6 family.

The chain is Golgin subfamily A member 6-like protein 22 from Homo sapiens (Human).